Here is a 454-residue protein sequence, read N- to C-terminus: Anthocyanidin 3-O-galactosyltransferase 3GT6 (454 aa).

The N-terminal stretch at Met-1–Ala-21 is a signal peptide. Positions 18 and 20 each coordinate an anthocyanidin. His-20 acts as the Proton acceptor in catalysis. Asp-117 (charge relay) is an active-site residue. His-148 lines the an anthocyanidin pocket. Ala-331, Gln-333, His-348, Trp-351, Asn-352, Ser-353, and Glu-356 together coordinate UDP-alpha-D-glucose. Gly-371 is a binding site for an anthocyanidin. Asp-372 lines the UDP-alpha-D-glucose pocket. An N-linked (GlcNAc...) asparagine glycan is attached at Asn-441.

Belongs to the UDP-glycosyltransferase family. Monomer. In terms of tissue distribution, mostly expressed in leaves and flowers and, to a lower extent, in roots. In flowers, mainly observed in petals, stamens and scapes, and at lower levels in pistils and toruses.

The enzyme catalyses cyanidin + UDP-alpha-D-galactose = cyanidin 3-O-beta-D-galactoside + UDP + H(+). It catalyses the reaction cyanidin + UDP-alpha-D-glucose = cyanidin 3-O-beta-D-glucoside + UDP + H(+). It carries out the reaction delphinidin + UDP-alpha-D-glucose = delphinidin 3-O-beta-D-glucoside + UDP. The catalysed reaction is peonidin + UDP-alpha-D-glucose = peonidin 3-O-beta-D-glucoside + UDP. The enzyme catalyses pelargonidin + UDP-alpha-D-glucose = pelargonidin 3-O-beta-D-glucoside + UDP. It catalyses the reaction delphinidin + UDP-alpha-D-galactose = delphinidin 3-O-beta-D-galactoside + UDP + H(+). It carries out the reaction pelargonidin + UDP-alpha-D-galactose = pelargonidin 3-O-beta-D-galactoside betaine + UDP. The catalysed reaction is peonidin + UDP-alpha-D-galactose = peonidin 3-O-beta-D-galactoside + UDP. The enzyme catalyses petunidin + UDP-alpha-D-galactose = petunidin 3-O-beta-D-galactoside + UDP. It catalyses the reaction petunidin + UDP-alpha-D-glucose = petunidin 3-O-beta-D-glucoside + UDP. It carries out the reaction an anthocyanidin + UDP-alpha-D-glucose + H(+) = an anthocyanidin 3-O-beta-D-glucoside + UDP. The catalysed reaction is an anthocyanidin + UDP-alpha-D-galactose = an anthocyanidin 3-O-beta-D-galactoside + UDP. It participates in pigment biosynthesis; anthocyanin biosynthesis. Its function is as follows. Flavonoid 3-O-glycosyltransferase involved in the biosynthesis of anthocyanins conferring flower red/pink colors, mainly anthocyanidin 3-O-glycosides. Catalyzes the addition of UDP-sugar to the 3-OH of anthocyanidin, with a preference for UDP-galactose (UDP-Gal) as sugar donor and cyanidin as substrate; able to use delphinidin, pelargonidin, peonidin and petunidin as substrates in the presence of UDP-Gal, but barely active on malvidin. Can also use UDP-glucose (UDP-Glu) as sugar donor with cyanidin, delphinidin, pelargonidin, peonidin and petunidin as substrates, but not active on malvidin. This Rhododendron delavayi (Rhododendron) protein is Anthocyanidin 3-O-galactosyltransferase 3GT6.